The sequence spans 136 residues: Large ribosomal subunit protein bL21 (136 aa).

Low complexity predominate over residues 1 to 21 (MSETPSKAKASKPAESKAQAS). The segment at 1–25 (MSETPSKAKASKPAESKAQASDSSG) is disordered.

Belongs to the bacterial ribosomal protein bL21 family. As to quaternary structure, part of the 50S ribosomal subunit. Contacts protein L20.

This protein binds to 23S rRNA in the presence of protein L20. The protein is Large ribosomal subunit protein bL21 of Synechococcus sp. (strain RCC307).